A 374-amino-acid chain; its full sequence is DNA replication and repair protein RecF (374 aa).

34–41 (GDNGAGKT) provides a ligand contact to ATP.

The protein belongs to the RecF family.

Its subcellular location is the cytoplasm. The RecF protein is involved in DNA metabolism; it is required for DNA replication and normal SOS inducibility. RecF binds preferentially to single-stranded, linear DNA. It also seems to bind ATP. The sequence is that of DNA replication and repair protein RecF from Rhizobium leguminosarum bv. trifolii (strain WSM2304).